Reading from the N-terminus, the 116-residue chain is Large ribosomal subunit protein bL20 (116 aa).

The protein belongs to the bacterial ribosomal protein bL20 family.

In terms of biological role, binds directly to 23S ribosomal RNA and is necessary for the in vitro assembly process of the 50S ribosomal subunit. It is not involved in the protein synthesizing functions of that subunit. This is Large ribosomal subunit protein bL20 from Synechococcus elongatus (strain ATCC 33912 / PCC 7942 / FACHB-805) (Anacystis nidulans R2).